The sequence spans 355 residues: UPF0421 protein BALH_2468 (355 aa).

The next 4 helical transmembrane spans lie at 19–39 (IAVF…IFAV), 74–94 (FTFF…FTIV), 109–129 (TLTA…AFLI), and 131–151 (LATT…ILPP).

It belongs to the UPF0421 family.

The protein localises to the cell membrane. This Bacillus thuringiensis (strain Al Hakam) protein is UPF0421 protein BALH_2468.